Consider the following 188-residue polypeptide: Crossover junction endodeoxyribonuclease RuvC (188 aa).

Residues D7, E68, and D141 contribute to the active site. Residues D7, E68, and D141 each contribute to the Mg(2+) site.

The protein belongs to the RuvC family. As to quaternary structure, homodimer which binds Holliday junction (HJ) DNA. The HJ becomes 2-fold symmetrical on binding to RuvC with unstacked arms; it has a different conformation from HJ DNA in complex with RuvA. In the full resolvosome a probable DNA-RuvA(4)-RuvB(12)-RuvC(2) complex forms which resolves the HJ. Mg(2+) is required as a cofactor.

Its subcellular location is the cytoplasm. It carries out the reaction Endonucleolytic cleavage at a junction such as a reciprocal single-stranded crossover between two homologous DNA duplexes (Holliday junction).. Functionally, the RuvA-RuvB-RuvC complex processes Holliday junction (HJ) DNA during genetic recombination and DNA repair. Endonuclease that resolves HJ intermediates. Cleaves cruciform DNA by making single-stranded nicks across the HJ at symmetrical positions within the homologous arms, yielding a 5'-phosphate and a 3'-hydroxyl group; requires a central core of homology in the junction. The consensus cleavage sequence is 5'-(A/T)TT(C/G)-3'. Cleavage occurs on the 3'-side of the TT dinucleotide at the point of strand exchange. HJ branch migration catalyzed by RuvA-RuvB allows RuvC to scan DNA until it finds its consensus sequence, where it cleaves and resolves the cruciform DNA. The sequence is that of Crossover junction endodeoxyribonuclease RuvC from Mycobacterium leprae (strain TN).